Reading from the N-terminus, the 476-residue chain is MESLKRFLCSIALLLISLLLPSSLAQQQQHESIRTMEDFSGYPIHEPGQFGSINLASSLSVDAPGLQNQIDELSSFSDAPSPSVTRVLYTDKDVSARRYVKNLMALAGLTVREDAVGNIFGKWDGLEPNLPAVATGSHIDAIPYSGKYDGVVGVLGAIEAINVLKRSGFKPKRSLEIILFTSEEPTRFGISCLGSRLLAGSKELAEALKTTVVDGQNVSFIEAARSAGYAEDKDDDLSSVFLKKGSYFAFLELHIEQGPILEDEGLDIGVVTAIAAPASLKVEFEGNGGHAGAVLMPYRNDAGLAAAELALAVEKHVLESESIDTVGTVGILELHPGAINSIPSKSHLEIDTRDIDEARRNTVIKKIQESANTIAKKRKVKLSEFKIVNQDPPALSDKLVIKKMAEAATELNLSHKMMISRAYHDSLFMARISPMGMIFIPCYKGYSHKPEEYSSPEDMANGVKVLSLTLAKLSLD.

The first 25 residues, M1–A25, serve as a signal peptide directing secretion. Positions 138, 149, 184, and 254 each coordinate Mn(2+). Residues E183–E184, H254–Q257, H290, N340, R353, Y423–H424, and H448 each bind substrate. An involved in dimerization region spans residues A276–D391. H448 contributes to the Mn(2+) binding site.

The protein belongs to the peptidase M20 family. As to quaternary structure, homodimer. The cofactor is Mn(2+). Requires Ni(2+) as cofactor. It depends on Co(2+) as a cofactor.

The protein resides in the endoplasmic reticulum. It carries out the reaction (S)-ureidoglycolate + H2O + 2 H(+) = glyoxylate + 2 NH4(+) + CO2. It participates in nitrogen metabolism; (S)-allantoin degradation; glyoxylate from (S)-ureidoglycolate: step 1/1. Involved in the catabolism of purine nucleotides. Can use (S)-ureidoglycolate as substrate, but not (R)-ureidoglycolate or allantoate. The sequential activity of AAH, UGLYAH and UAH allows a complete purine breakdown without the intermediate generation of urea. This chain is Ureidoglycolate hydrolase, found in Arabidopsis thaliana (Mouse-ear cress).